Here is a 283-residue protein sequence, read N- to C-terminus: Ribonuclease P protein subunit p38 (283 aa).

Alanine 2 carries the post-translational modification N-acetylalanine. 3 positions are modified to phosphoserine: serine 12, serine 226, and serine 235.

The protein belongs to the eukaryotic ribosomal protein eL8 family. As to quaternary structure, component of nuclear RNase P and RNase MRP ribonucleoproteins. RNase P consists of a catalytic RNA moiety and about 10 protein subunits; POP1, POP4, POP5, POP7, RPP14, RPP21, RPP25, RPP30, RPP38 and RPP40. Within the RNase P complex, POP1, POP7 and RPP25 form the 'finger' subcomplex, POP5, RPP14, RPP40 and homodimeric RPP30 form the 'palm' subcomplex, and RPP21, POP4 and RPP38 form the 'wrist' subcomplex. All subunits of the RNase P complex interact with the catalytic RNA. Several subunits of RNase P are also part of the RNase MRP complex. RNase MRP consists of a catalytic RNA moiety and about 8 protein subunits; POP1, POP7, RPP25, RPP30, RPP38, RPP40 and possibly also POP4 and POP5.

It localises to the nucleus. Its subcellular location is the nucleolus. Functionally, component of ribonuclease P, a ribonucleoprotein complex that generates mature tRNA molecules by cleaving their 5'-ends. Also a component of the MRP ribonuclease complex, which cleaves pre-rRNA sequences. The polypeptide is Ribonuclease P protein subunit p38 (RPP38) (Homo sapiens (Human)).